Reading from the N-terminus, the 206-residue chain is Ribonuclease HII (206 aa).

The RNase H type-2 domain maps to 27 to 206 (ARIAGVDEAG…CALHRRSFKH (180 aa)). A divalent metal cation-binding residues include D33, E34, and D125.

This sequence belongs to the RNase HII family. The cofactor is Mn(2+). Mg(2+) is required as a cofactor.

It localises to the cytoplasm. It catalyses the reaction Endonucleolytic cleavage to 5'-phosphomonoester.. Its function is as follows. Endonuclease that specifically degrades the RNA of RNA-DNA hybrids. The sequence is that of Ribonuclease HII from Moorella thermoacetica (strain ATCC 39073 / JCM 9320).